A 757-amino-acid chain; its full sequence is 5-methyltetrahydropteroyltriglutamate--homocysteine methyltransferase (757 aa).

Residues 17 to 20 (RELK) and Lys-117 contribute to the 5-methyltetrahydropteroyltri-L-glutamate site. L-homocysteine-binding positions include 434-436 (IGS) and Glu-487. L-methionine is bound by residues 434 to 436 (IGS) and Glu-487. 5-methyltetrahydropteroyltri-L-glutamate-binding positions include 518-519 (RC) and Trp-564. Asp-602 lines the L-homocysteine pocket. Asp-602 contributes to the L-methionine binding site. Residue Glu-608 coordinates 5-methyltetrahydropteroyltri-L-glutamate. 3 residues coordinate Zn(2+): His-644, Cys-646, and Glu-668. The active-site Proton donor is the His-697. A Zn(2+)-binding site is contributed by Cys-729.

It belongs to the vitamin-B12 independent methionine synthase family. Zn(2+) serves as cofactor.

The catalysed reaction is 5-methyltetrahydropteroyltri-L-glutamate + L-homocysteine = tetrahydropteroyltri-L-glutamate + L-methionine. The protein operates within amino-acid biosynthesis; L-methionine biosynthesis via de novo pathway; L-methionine from L-homocysteine (MetE route): step 1/1. Catalyzes the transfer of a methyl group from 5-methyltetrahydrofolate to homocysteine resulting in methionine formation. This chain is 5-methyltetrahydropteroyltriglutamate--homocysteine methyltransferase, found in Proteus mirabilis (strain HI4320).